The sequence spans 273 residues: 2,3,4,5-tetrahydropyridine-2,6-dicarboxylate N-succinyltransferase (273 aa).

The substrate site is built by arginine 104 and aspartate 141.

The protein belongs to the transferase hexapeptide repeat family. Homotrimer.

The protein localises to the cytoplasm. It catalyses the reaction (S)-2,3,4,5-tetrahydrodipicolinate + succinyl-CoA + H2O = (S)-2-succinylamino-6-oxoheptanedioate + CoA. It functions in the pathway amino-acid biosynthesis; L-lysine biosynthesis via DAP pathway; LL-2,6-diaminopimelate from (S)-tetrahydrodipicolinate (succinylase route): step 1/3. In Psychrobacter sp. (strain PRwf-1), this protein is 2,3,4,5-tetrahydropyridine-2,6-dicarboxylate N-succinyltransferase.